Reading from the N-terminus, the 166-residue chain is Regulator of ribonuclease activity A (166 aa).

Belongs to the RraA family. In terms of assembly, homotrimer. Binds to both RNA-binding sites in the C-terminal region of Rne and to RhlB.

It is found in the cytoplasm. In terms of biological role, globally modulates RNA abundance by binding to RNase E (Rne) and regulating its endonucleolytic activity. Can modulate Rne action in a substrate-dependent manner by altering the composition of the degradosome. Modulates RNA-binding and helicase activities of the degradosome. The protein is Regulator of ribonuclease activity A of Histophilus somni (strain 2336) (Haemophilus somnus).